The sequence spans 127 residues: Glycine cleavage system H protein (127 aa).

In terms of domain architecture, Lipoyl-binding spans 24-105 (TLTVGVTDHA…AYAAWLFKLK (82 aa)). Position 65 is an N6-lipoyllysine (lysine 65).

This sequence belongs to the GcvH family. As to quaternary structure, the glycine cleavage system is composed of four proteins: P, T, L and H. It depends on (R)-lipoate as a cofactor.

In terms of biological role, the glycine cleavage system catalyzes the degradation of glycine. The H protein shuttles the methylamine group of glycine from the P protein to the T protein. This is Glycine cleavage system H protein from Azoarcus sp. (strain BH72).